We begin with the raw amino-acid sequence, 347 residues long: NADH-ubiquinone oxidoreductase chain 2 (347 aa).

10 consecutive transmembrane segments (helical) span residues 3–23 (PIIY…VMIS), 25–45 (HWLL…PVLM), 59–79 (YFLT…INLL), 89–109 (MFNP…LGLS), 149–169 (INPN…GWGG), 178–198 (IMAY…PYNT), 200–220 (MTIL…MLLI), 237–257 (MPVI…LPPL), 274–294 (ESII…YFYM), and 325–345 (LLPT…ALSS).

Belongs to the complex I subunit 2 family. As to quaternary structure, core subunit of respiratory chain NADH dehydrogenase (Complex I) which is composed of 45 different subunits. Interacts with TMEM242.

Its subcellular location is the mitochondrion inner membrane. It carries out the reaction a ubiquinone + NADH + 5 H(+)(in) = a ubiquinol + NAD(+) + 4 H(+)(out). Core subunit of the mitochondrial membrane respiratory chain NADH dehydrogenase (Complex I) which catalyzes electron transfer from NADH through the respiratory chain, using ubiquinone as an electron acceptor. Essential for the catalytic activity and assembly of complex I. In Sus scrofa (Pig), this protein is NADH-ubiquinone oxidoreductase chain 2.